The primary structure comprises 239 residues: Cysteine-rich venom protein ophanin (239 aa).

The signal sequence occupies residues 1-18 (MIAFTLLSLAAVLQQSFG). One can recognise an SCP domain in the interval 37-165 (VDLHNSLRRS…EYSYFYVCQY (129 aa)). 8 disulfide bridges follow: Cys-74–Cys-152, Cys-91–Cys-166, Cys-147–Cys-163, Cys-185–Cys-192, Cys-188–Cys-197, Cys-201–Cys-234, Cys-210–Cys-228, and Cys-219–Cys-232. Residues 201-234 (CTLYNEYTNCDSLVKQSSCQDEWIKSKCPASCFC) form the ShKT domain.

As to expression, expressed by the venom gland.

It is found in the secreted. In terms of biological role, weakly blocks contraction of smooth muscle elicited by high potassium-induced depolarization, but does not block caffeine-stimulated contraction. May target voltage-gated calcium channels on smooth muscle. This is Cysteine-rich venom protein ophanin from Ophiophagus hannah (King cobra).